A 170-amino-acid polypeptide reads, in one-letter code: MLRTMLTAKIHRATVTQADLHYVGSVTIDADLLEAADLLPGEQVTIVDINNGARLETYAIAGPAGSGVIGINGAAARLVQPGDLVIIIAYGMMDDAEARRHVPRVLFVDAENRIIGRGHDPAEALPDDPSSLRGDLAVPGNPVTAAARRGTPTHQAPVALPASRTVVAPR.

S25 acts as the Schiff-base intermediate with substrate; via pyruvic acid in catalysis. A Pyruvic acid (Ser) modification is found at S25. T57 contributes to the substrate binding site. Y58 acts as the Proton donor in catalysis. Substrate is bound at residue 73-75 (GAA). The interval 118-170 (GHDPAEALPDDPSSLRGDLAVPGNPVTAAARRGTPTHQAPVALPASRTVVAPR) is disordered.

It belongs to the PanD family. In terms of assembly, heterooctamer of four alpha and four beta subunits. Pyruvate is required as a cofactor. Post-translationally, is synthesized initially as an inactive proenzyme, which is activated by self-cleavage at a specific serine bond to produce a beta-subunit with a hydroxyl group at its C-terminus and an alpha-subunit with a pyruvoyl group at its N-terminus.

The protein resides in the cytoplasm. The catalysed reaction is L-aspartate + H(+) = beta-alanine + CO2. It participates in cofactor biosynthesis; (R)-pantothenate biosynthesis; beta-alanine from L-aspartate: step 1/1. Catalyzes the pyruvoyl-dependent decarboxylation of aspartate to produce beta-alanine. This Frankia alni (strain DSM 45986 / CECT 9034 / ACN14a) protein is Aspartate 1-decarboxylase.